Here is a 163-residue protein sequence, read N- to C-terminus: MADPRRARLTDDTEIAGARALIVEARFYDDIQDAMLEGARAELTAAGLTHDVITVPGALEIPAAIAIALDAAEAHGKPYDAVIALGCVVRGDTIHFEIVSMESSRALMDLAVSRKIPLGNGIITVNTDEQAWARAKATELDKGGDAARAALAMLRIKRRLAKG.

Residues F27, 58–60, and 87–89 each bind 5-amino-6-(D-ribitylamino)uracil; these read ALE and CVV. A (2S)-2-hydroxy-3-oxobutyl phosphate-binding site is contributed by 92–93; sequence DT. H95 serves as the catalytic Proton donor. N120 contacts 5-amino-6-(D-ribitylamino)uracil. R134 is a binding site for (2S)-2-hydroxy-3-oxobutyl phosphate.

It belongs to the DMRL synthase family.

The catalysed reaction is (2S)-2-hydroxy-3-oxobutyl phosphate + 5-amino-6-(D-ribitylamino)uracil = 6,7-dimethyl-8-(1-D-ribityl)lumazine + phosphate + 2 H2O + H(+). It participates in cofactor biosynthesis; riboflavin biosynthesis; riboflavin from 2-hydroxy-3-oxobutyl phosphate and 5-amino-6-(D-ribitylamino)uracil: step 1/2. Catalyzes the formation of 6,7-dimethyl-8-ribityllumazine by condensation of 5-amino-6-(D-ribitylamino)uracil with 3,4-dihydroxy-2-butanone 4-phosphate. This is the penultimate step in the biosynthesis of riboflavin. This chain is 6,7-dimethyl-8-ribityllumazine synthase, found in Rhodopseudomonas palustris (strain BisA53).